We begin with the raw amino-acid sequence, 218 residues long: NAD(P)H-quinone oxidoreductase subunit I (218 aa).

2 4Fe-4S ferredoxin-type domains span residues 55–84 (GRIH…VDWV) and 95–124 (RNYS…MTEE). Cysteine 64, cysteine 67, cysteine 70, cysteine 74, cysteine 104, cysteine 107, cysteine 110, and cysteine 114 together coordinate [4Fe-4S] cluster. The segment at 169–218 (MDPHELPANQQRAGKLPSQIIKELQAEKSEEKGNNNSSDIVPNKLNSTNK) is disordered. Positions 192–201 (LQAEKSEEKG) are enriched in basic and acidic residues. The segment covering 202–218 (NNNSSDIVPNKLNSTNK) has biased composition (polar residues).

This sequence belongs to the complex I 23 kDa subunit family. NDH-1 is composed of at least 11 different subunits. [4Fe-4S] cluster serves as cofactor.

It localises to the cellular thylakoid membrane. The catalysed reaction is a plastoquinone + NADH + (n+1) H(+)(in) = a plastoquinol + NAD(+) + n H(+)(out). It carries out the reaction a plastoquinone + NADPH + (n+1) H(+)(in) = a plastoquinol + NADP(+) + n H(+)(out). In terms of biological role, NDH-1 shuttles electrons from an unknown electron donor, via FMN and iron-sulfur (Fe-S) centers, to quinones in the respiratory and/or the photosynthetic chain. The immediate electron acceptor for the enzyme in this species is believed to be plastoquinone. Couples the redox reaction to proton translocation, and thus conserves the redox energy in a proton gradient. In Prochlorococcus marinus (strain NATL1A), this protein is NAD(P)H-quinone oxidoreductase subunit I.